The chain runs to 96 residues: Ferredoxin (96 aa).

A 2Fe-2S ferredoxin-type domain is found at 4 to 94; it reads YKVKLLTPEG…DVVIETHKEE (91 aa). Residues C40, C45, C48, and C78 each coordinate [2Fe-2S] cluster.

The protein belongs to the 2Fe2S plant-type ferredoxin family. [2Fe-2S] cluster serves as cofactor.

It localises to the plastid. Its subcellular location is the chloroplast. In terms of biological role, ferredoxins are iron-sulfur proteins that transfer electrons in a wide variety of metabolic reactions. The polypeptide is Ferredoxin (Panax ginseng (Korean ginseng)).